A 332-amino-acid polypeptide reads, in one-letter code: L-lactate dehydrogenase A chain (332 aa).

NAD(+) is bound by residues 29 to 57 and arginine 99; that span reads GAVG…IEDK. Substrate is bound by residues arginine 106, asparagine 138, and arginine 169. An NAD(+)-binding site is contributed by asparagine 138. Residue histidine 193 is the Proton acceptor of the active site. Threonine 248 is a substrate binding site.

It belongs to the LDH/MDH superfamily. LDH family. Homotetramer.

It is found in the cytoplasm. The enzyme catalyses (S)-lactate + NAD(+) = pyruvate + NADH + H(+). It functions in the pathway fermentation; pyruvate fermentation to lactate; (S)-lactate from pyruvate: step 1/1. Its function is as follows. Interconverts simultaneously and stereospecifically pyruvate and lactate with concomitant interconversion of NADH and NAD(+). The sequence is that of L-lactate dehydrogenase A chain (LDHA) from Trachemys scripta elegans (Red-eared slider turtle).